The sequence spans 232 residues: Cobalt transport protein CbiM (232 aa).

The next 6 helical transmembrane spans lie at 6–26 (GFLPPAHAIAWGVASAPFVVH), 43–63 (LLLGASGAFTFVLSALKLPSV), 84–104 (IMAVLGTITLLFQALLLAHGG), 107–127 (TLGANVFSMAIVGPWAGYGVY), 135–155 (VPLMVTVFFGAFVADLSTYCV), and 181–201 (IFAVTQIPLAVSEGLLTVIVM).

This sequence belongs to the CbiM family. As to quaternary structure, forms an energy-coupling factor (ECF) transporter complex composed of an ATP-binding protein (A component, CbiO), a transmembrane protein (T component, CbiQ) and 2 possible substrate-capture proteins (S components, CbiM and CbiN) of unknown stoichimetry.

It is found in the cell membrane. It functions in the pathway cofactor biosynthesis; adenosylcobalamin biosynthesis. In terms of biological role, part of the energy-coupling factor (ECF) transporter complex CbiMNOQ involved in cobalt import. The polypeptide is Cobalt transport protein CbiM (Streptomyces coelicolor (strain ATCC BAA-471 / A3(2) / M145)).